The following is a 252-amino-acid chain: ATP-dependent L-serine kinase (252 aa).

Glu-35 is a catalytic residue. Val-73 is an O-phospho-L-serine binding site. Asp-74 contacts Mg(2+). O-phospho-L-serine is bound by residues Gly-75, His-76, His-77, Trp-107, Lys-231, Thr-233, and His-235.

It belongs to the SerK family. Monomer. It depends on Mg(2+) as a cofactor.

The enzyme catalyses L-serine + ATP = O-phospho-L-serine + ADP + H(+). Free serine kinase that uses ATP to phosphorylate L-serine to yield O-phospho-L-serine and ADP. Can use ATP, UTP, CTP, GTP and the inorganic polyphosphates triphosphate and tetraphosphate as phosphate donors, with a preference for nucleoside 5'-triphosphates, but cannot use ADP. The catalytic efficiency is highest for ATP. Is specific for L-serine and cannot phosphorylate structurally similar compounds such as D-serine, L-threonine, L-homoserine, hydroxypyruvate, 3-hydroxypropionate and DL-glycerate. Likely contributes to serine metabolism, including cysteine biosynthesis. The sequence is that of ATP-dependent L-serine kinase from Staphylothermus marinus (strain ATCC 43588 / DSM 3639 / JCM 9404 / F1).